Here is a 418-residue protein sequence, read N- to C-terminus: Serine hydroxymethyltransferase (418 aa).

Residues Leu121 and 125–127 (GHL) each bind (6S)-5,6,7,8-tetrahydrofolate. Residue Lys230 is modified to N6-(pyridoxal phosphate)lysine. Residue 355–357 (SPF) participates in (6S)-5,6,7,8-tetrahydrofolate binding.

Belongs to the SHMT family. Homodimer. Pyridoxal 5'-phosphate serves as cofactor.

The protein localises to the cytoplasm. The enzyme catalyses (6R)-5,10-methylene-5,6,7,8-tetrahydrofolate + glycine + H2O = (6S)-5,6,7,8-tetrahydrofolate + L-serine. It participates in one-carbon metabolism; tetrahydrofolate interconversion. The protein operates within amino-acid biosynthesis; glycine biosynthesis; glycine from L-serine: step 1/1. Catalyzes the reversible interconversion of serine and glycine with tetrahydrofolate (THF) serving as the one-carbon carrier. This reaction serves as the major source of one-carbon groups required for the biosynthesis of purines, thymidylate, methionine, and other important biomolecules. Also exhibits THF-independent aldolase activity toward beta-hydroxyamino acids, producing glycine and aldehydes, via a retro-aldol mechanism. The protein is Serine hydroxymethyltransferase of Alcanivorax borkumensis (strain ATCC 700651 / DSM 11573 / NCIMB 13689 / SK2).